A 796-amino-acid chain; its full sequence is MEEMEALVGVVPHSADCDLFKEPVRKRRRLHRDRQFQAFPSAEQSALKEYEKLECRTRRVLSNTYQKLIQSVFLDDSIPSGLKYLINRLLALIEKSPLEPVYVGFLGITGAGKSSLINALIRQAMFLPVSGESVCTSCIVQVSSGCCEQYEAKIHLLSDQEWKAELKDLTKLLHRAEQSGEEEADLWDRDDATEEAAQKLRMLYGHGAERRHYEELLRLKPRGRIPNSRTITLKAEEAGELSVKLDPYIRTRRRDWDGESAETQIWPLIKYVEVILPKSALIPEGVVLVDIPGTGDFNSKRDKMWKKTIDKCSVIWVISDIERVSGGKTHEDLLSESIKACQRGFCRDIALVVTKTDKLHLQEYLRERKMGNQAIQSQREAVLQRNEIIKLQRKRMLKEKLKRKLPADSKVLEASDLVYTVSAHEYWQRTILTEEESEIPKLREYIRKRILDKKRRLVTKYVTEAFGLLLLTDTLNTEESLLTEELNTGGLRQFVEEKMELLEKAIEQCFARMEQPLQTGVQVAMTSYRRILGSCLVRSRGNQGFHQTLKAVCLKNGVYASRTLARIDLNEALSQPIYDQIDPVFGGIFRDGKPTAPALMQHIDAFKHSLEERMAEVGVRSGWKQDGYKRSFLIQEISAILGGLESHILRRKRKIYKSVTSSIQNDLKPCYEEAAQITGKKACERMKDVIRRGVERQVAEGLFERAQERMWHQFRQLKHGITEKVKGSITTMLTLAAPQGVGLCKELADVRNEQKEMEKLYRSLREVAENAQLRRSMQDFLLRMSPSKAGPHGTKL.

107-114 (GITGAGKS) contributes to the GTP binding site. 2 coiled-coil regions span residues 158-185 (SDQE…EEAD) and 742-776 (GLCK…LRRS).

The protein localises to the nucleus speckle. Functionally, nuclear GTPase found in germinal center B-cells, where it may inhibit function of the activation-induced cytidine deaminase AICDA. Reduces somatic hypermutation in B-cells which may enhance genome stability. The protein is Nuclear GTPase SLIP-GC of Mus musculus (Mouse).